The sequence spans 433 residues: Glutamate--tRNA ligase 1 (433 aa).

Residues 7–17 (PSPTGLIHLGN) carry the 'HIGH' region motif. The short motif at 230–234 (KMSKR) is the 'KMSKS' region element. Lys233 contacts ATP.

The protein belongs to the class-I aminoacyl-tRNA synthetase family. Glutamate--tRNA ligase type 1 subfamily. In terms of assembly, monomer.

The protein resides in the cytoplasm. It carries out the reaction tRNA(Glu) + L-glutamate + ATP = L-glutamyl-tRNA(Glu) + AMP + diphosphate. Functionally, catalyzes the attachment of glutamate to tRNA(Glu) in a two-step reaction: glutamate is first activated by ATP to form Glu-AMP and then transferred to the acceptor end of tRNA(Glu). The polypeptide is Glutamate--tRNA ligase 1 (Neorickettsia sennetsu (strain ATCC VR-367 / Miyayama) (Ehrlichia sennetsu)).